Consider the following 137-residue polypeptide: Ribosome-binding factor A (137 aa).

It belongs to the RbfA family. Monomer. Binds 30S ribosomal subunits, but not 50S ribosomal subunits or 70S ribosomes.

The protein localises to the cytoplasm. In terms of biological role, one of several proteins that assist in the late maturation steps of the functional core of the 30S ribosomal subunit. Associates with free 30S ribosomal subunits (but not with 30S subunits that are part of 70S ribosomes or polysomes). Required for efficient processing of 16S rRNA. May interact with the 5'-terminal helix region of 16S rRNA. In Synechococcus sp. (strain ATCC 27144 / PCC 6301 / SAUG 1402/1) (Anacystis nidulans), this protein is Ribosome-binding factor A.